Here is a 248-residue protein sequence, read N- to C-terminus: tRNA (guanine-N(1)-)-methyltransferase (248 aa).

Residues glycine 113 and 133-138 each bind S-adenosyl-L-methionine; that span reads IGDYVL.

This sequence belongs to the RNA methyltransferase TrmD family. Homodimer.

The protein localises to the cytoplasm. It carries out the reaction guanosine(37) in tRNA + S-adenosyl-L-methionine = N(1)-methylguanosine(37) in tRNA + S-adenosyl-L-homocysteine + H(+). Specifically methylates guanosine-37 in various tRNAs. This is tRNA (guanine-N(1)-)-methyltransferase from Shewanella halifaxensis (strain HAW-EB4).